A 227-amino-acid polypeptide reads, in one-letter code: Translation initiation factor 6 (227 aa).

The protein belongs to the eIF-6 family.

Functionally, binds to the 50S ribosomal subunit and prevents its association with the 30S ribosomal subunit to form the 70S initiation complex. In Pyrococcus furiosus (strain ATCC 43587 / DSM 3638 / JCM 8422 / Vc1), this protein is Translation initiation factor 6.